The sequence spans 450 residues: Salicylate synthase (450 aa).

The active-site Proton donor is the Glu252. 270–271 (GT) contacts substrate. Position 297 (Glu297) interacts with Mg(2+). Substrate is bound by residues Tyr385, Arg405, and 419 to 421 (GAG). Positions 431 and 434 each coordinate Mg(2+). A substrate-binding site is contributed by Lys438.

The protein belongs to the anthranilate synthase component I family. Salicylate synthase subfamily. Monomer. Requires Mg(2+) as cofactor.

It carries out the reaction chorismate = isochorismate. It catalyses the reaction isochorismate = salicylate + pyruvate. The enzyme catalyses chorismate = prephenate. Its pathway is siderophore biosynthesis; mycobactin biosynthesis. Functionally, involved in the incorporation of salicylate into the virulence-conferring salicylate-based siderophore mycobactin. Catalyzes the initial conversion of chorismate to yield the intermediate isochorismate (isochorismate synthase activity), and the subsequent elimination of the enolpyruvyl side chain in a lyase reaction to give salicylate (isochorismate pyruvate-lyase activity). In the absence of magnesium, MbtI displays a chorismate mutase activity and converts chorismate to prephenate. The sequence is that of Salicylate synthase (mbtI) from Mycolicibacterium paratuberculosis (strain ATCC BAA-968 / K-10) (Mycobacterium paratuberculosis).